We begin with the raw amino-acid sequence, 142 residues long: Hemoglobin subunit alpha-3 (142 aa).

The Globin domain maps to 2-142; that stretch reads TLTDSDKAAV…VATVLTSKYR (141 aa). O2 is bound at residue H59. H88 serves as a coordination point for heme b.

The protein belongs to the globin family. In terms of assembly, heterotetramer of two alpha chains and two beta chains. In terms of tissue distribution, red blood cells.

In terms of biological role, this is a larval (tadpole) alpha-globin. This chain is Hemoglobin subunit alpha-3 (hba3), found in Xenopus laevis (African clawed frog).